A 384-amino-acid polypeptide reads, in one-letter code: MGIKGLTKLLSDYAPGCMREQKFEGYLDRKVAIDASMHIYQFMMVVGRSGEQQLTNEAGEVTSHLQGMFTRTLRMLKAGIKPVYVFDGKPPTMKGGELAKRKDKREAAESALEKAKEAGDQEEIEKLSKRTVRVSKVHSEEVMKLARFLGLPVFEAPCEAEATCAALCKAGLVYAAASEDMDTLCFSTPKLARNLMAPSSQEKPILEFDFDKLLAGLELTWDQFIDVCILCGCDYCDSIKGIGPVNALKYIKQYGNIEGLLEHLDKEKYPVPDDWPYKEARVLFKNPEVVQTDGLTLKWTAPDEEAVVAFLCGEKSFNEDRIRKQLADLKKARSQGGQNRLETFFGAATVKSSTVGKRKEPEKGKGKFGAAGGKKSKGVTKRKF.

Residues 1–105 form an N-domain region; the sequence is MGIKGLTKLL…GELAKRKDKR (105 aa). Residue Asp-34 coordinates Mg(2+). DNA is bound at residue Arg-71. Positions 87, 159, 161, 180, and 182 each coordinate Mg(2+). The interval 123–254 is I-domain; sequence EIEKLSKRTV…VNALKYIKQY (132 aa). Residue Glu-159 coordinates DNA. DNA is bound by residues Gly-232 and Asp-234. Asp-234 lines the Mg(2+) pocket. Residues 337 to 345 form an interaction with PCNA region; it reads GQNRLETFF. Residues 353 to 384 form a disordered region; the sequence is STVGKRKEPEKGKGKFGAAGGKKSKGVTKRKF. The segment covering 374–384 has biased composition (basic residues); sequence KKSKGVTKRKF.

This sequence belongs to the XPG/RAD2 endonuclease family. FEN1 subfamily. In terms of assembly, interacts with PCNA. Three molecules of FEN1 bind to one PCNA trimer with each molecule binding to one PCNA monomer. PCNA stimulates the nuclease activity without altering cleavage specificity. The cofactor is Mg(2+). Post-translationally, phosphorylated. Phosphorylation upon DNA damage induces relocalization to the nuclear plasma.

Its subcellular location is the nucleus. The protein resides in the nucleolus. It localises to the nucleoplasm. The protein localises to the mitochondrion. Structure-specific nuclease with 5'-flap endonuclease and 5'-3' exonuclease activities involved in DNA replication and repair. During DNA replication, cleaves the 5'-overhanging flap structure that is generated by displacement synthesis when DNA polymerase encounters the 5'-end of a downstream Okazaki fragment. It enters the flap from the 5'-end and then tracks to cleave the flap base, leaving a nick for ligation. Also involved in the long patch base excision repair (LP-BER) pathway, by cleaving within the apurinic/apyrimidinic (AP) site-terminated flap. Acts as a genome stabilization factor that prevents flaps from equilibrating into structures that lead to duplications and deletions. Also possesses 5'-3' exonuclease activity on nicked or gapped double-stranded DNA, and exhibits RNase H activity. Also involved in replication and repair of rDNA and in repairing mitochondrial DNA. The chain is Flap endonuclease 1 from Micromonas commoda (strain RCC299 / NOUM17 / CCMP2709) (Picoplanktonic green alga).